The following is a 157-amino-acid chain: Large ribosomal subunit protein uL11 (157 aa).

It belongs to the universal ribosomal protein uL11 family. Part of the ribosomal stalk of the 50S ribosomal subunit. Interacts with L10 and the large rRNA to form the base of the stalk. L10 forms an elongated spine to which L12 dimers bind in a sequential fashion forming a multimeric L10(L12)X complex.

In terms of biological role, forms part of the ribosomal stalk which helps the ribosome interact with GTP-bound translation factors. The chain is Large ribosomal subunit protein uL11 from Archaeoglobus fulgidus (strain ATCC 49558 / DSM 4304 / JCM 9628 / NBRC 100126 / VC-16).